The following is an 87-amino-acid chain: DNA-directed RNA polymerase subunit omega (87 aa).

This sequence belongs to the RNA polymerase subunit omega family. As to quaternary structure, the RNAP catalytic core consists of 2 alpha, 1 beta, 1 beta' and 1 omega subunit. When a sigma factor is associated with the core the holoenzyme is formed, which can initiate transcription.

It catalyses the reaction RNA(n) + a ribonucleoside 5'-triphosphate = RNA(n+1) + diphosphate. Promotes RNA polymerase assembly. Latches the N- and C-terminal regions of the beta' subunit thereby facilitating its interaction with the beta and alpha subunits. In Pseudomonas fluorescens (strain SBW25), this protein is DNA-directed RNA polymerase subunit omega.